A 121-amino-acid chain; its full sequence is Large ribosomal subunit protein uL14c (121 aa).

Belongs to the universal ribosomal protein uL14 family. As to quaternary structure, part of the 50S ribosomal subunit.

It localises to the plastid. The protein resides in the chloroplast. Its function is as follows. Binds to 23S rRNA. This is Large ribosomal subunit protein uL14c from Euglena gracilis.